A 72-amino-acid polypeptide reads, in one-letter code: Phosphonoacetate hydrolase (72 aa).

As to quaternary structure, monomer. Unlike bacterial phosphonoacetate hydrolase, does not require zinc as a cofactor. serves as cofactor.

The enzyme catalyses phosphonoacetate + H2O = acetate + phosphate + H(+). Its activity is regulated as follows. Unaffected by EDTA or Ca(2+), Co(2+), Cu(2+), Mg(2+), Mn(2+), Ni(2+) and Zn(2+). The protein is Phosphonoacetate hydrolase of Penicillium oxalicum.